A 384-amino-acid chain; its full sequence is S-adenosylmethionine synthase (384 aa).

Residue His-16 participates in ATP binding. Residue Asp-18 coordinates Mg(2+). A K(+)-binding site is contributed by Glu-44. 2 residues coordinate L-methionine: Glu-57 and Gln-100. Positions 100 to 110 are flexible loop; that stretch reads QSADIAMGVDE. ATP is bound by residues 165–167, Asp-240, 246–247, Ala-263, and Lys-267; these read DAK and RK. Residue Asp-240 coordinates L-methionine. Residue Lys-271 participates in L-methionine binding.

It belongs to the AdoMet synthase family. In terms of assembly, homotetramer; dimer of dimers. The cofactor is Mg(2+). K(+) is required as a cofactor.

It localises to the cytoplasm. The enzyme catalyses L-methionine + ATP + H2O = S-adenosyl-L-methionine + phosphate + diphosphate. It participates in amino-acid biosynthesis; S-adenosyl-L-methionine biosynthesis; S-adenosyl-L-methionine from L-methionine: step 1/1. Catalyzes the formation of S-adenosylmethionine (AdoMet) from methionine and ATP. The overall synthetic reaction is composed of two sequential steps, AdoMet formation and the subsequent tripolyphosphate hydrolysis which occurs prior to release of AdoMet from the enzyme. The sequence is that of S-adenosylmethionine synthase from Teredinibacter turnerae (strain ATCC 39867 / T7901).